The following is an 860-amino-acid chain: Glucans biosynthesis glucosyltransferase H (860 aa).

The next 6 membrane-spanning stretches (helical) occupy residues 141 to 161, 187 to 207, 515 to 535, 572 to 592, 599 to 619, and 682 to 702; these read FILLLLMLAQTSVATYYMKGI, VLPYVIQFGILALFAILFCWV, VFLTGVMSYLSAPLWFFFLVL, LFSTTLTLLFLPKLLSVMLIW, FGGVIRVTLSMLLEMFFSVLL, and FLWWLSPIVGSLMLSIPVSVI.

Belongs to the glycosyltransferase 2 family. OpgH subfamily.

The protein resides in the cell inner membrane. It functions in the pathway glycan metabolism; osmoregulated periplasmic glucan (OPG) biosynthesis. Its function is as follows. Involved in the biosynthesis of osmoregulated periplasmic glucans (OPGs). The sequence is that of Glucans biosynthesis glucosyltransferase H from Pseudomonas paraeruginosa (strain DSM 24068 / PA7) (Pseudomonas aeruginosa (strain PA7)).